We begin with the raw amino-acid sequence, 100 residues long: Small ribosomal subunit protein uS14c (100 aa).

It belongs to the universal ribosomal protein uS14 family. Part of the 30S ribosomal subunit.

Its subcellular location is the plastid. It is found in the chloroplast. In terms of biological role, binds 16S rRNA, required for the assembly of 30S particles. The protein is Small ribosomal subunit protein uS14c of Oltmannsiellopsis viridis (Marine flagellate).